Consider the following 272-residue polypeptide: Ribosomal RNA large subunit methyltransferase E (272 aa).

S-adenosyl-L-methionine is bound by residues glycine 50, tryptophan 52, aspartate 68, aspartate 84, and aspartate 109. Catalysis depends on lysine 149, which acts as the Proton acceptor. The TRAM domain occupies 196–254; that stretch reads PLRRGDKFVVDIEKLGSGGDGAVLIEGFVVFVKEVEVGEKVRIKIADVKPNFAFADVEE.

Belongs to the class I-like SAM-binding methyltransferase superfamily. RNA methyltransferase RlmE family.

It is found in the cytoplasm. It catalyses the reaction uridine(2552) in 23S rRNA + S-adenosyl-L-methionine = 2'-O-methyluridine(2552) in 23S rRNA + S-adenosyl-L-homocysteine + H(+). In terms of biological role, specifically methylates the uridine in position 2552 of 23S rRNA at the 2'-O position of the ribose in the fully assembled 50S ribosomal subunit. The protein is Ribosomal RNA large subunit methyltransferase E of Methanosarcina acetivorans (strain ATCC 35395 / DSM 2834 / JCM 12185 / C2A).